The sequence spans 209 residues: Protein-L-isoaspartate O-methyltransferase (209 aa).

The active site involves Ser-59.

This sequence belongs to the methyltransferase superfamily. L-isoaspartyl/D-aspartyl protein methyltransferase family.

It is found in the cytoplasm. It carries out the reaction [protein]-L-isoaspartate + S-adenosyl-L-methionine = [protein]-L-isoaspartate alpha-methyl ester + S-adenosyl-L-homocysteine. Catalyzes the methyl esterification of L-isoaspartyl residues in peptides and proteins that result from spontaneous decomposition of normal L-aspartyl and L-asparaginyl residues. It plays a role in the repair and/or degradation of damaged proteins. This chain is Protein-L-isoaspartate O-methyltransferase, found in Helicobacter pylori (strain P12).